An 885-amino-acid chain; its full sequence is Alanine--tRNA ligase (885 aa).

Residues 426-444 (QEQKTRARQDRREKQRGGA) show a composition bias toward basic and acidic residues. Positions 426–445 (QEQKTRARQDRREKQRGGAE) are disordered. Zn(2+) is bound by residues H568, H572, C671, and H675.

The protein belongs to the class-II aminoacyl-tRNA synthetase family. It depends on Zn(2+) as a cofactor.

Its subcellular location is the cytoplasm. It carries out the reaction tRNA(Ala) + L-alanine + ATP = L-alanyl-tRNA(Ala) + AMP + diphosphate. Catalyzes the attachment of alanine to tRNA(Ala) in a two-step reaction: alanine is first activated by ATP to form Ala-AMP and then transferred to the acceptor end of tRNA(Ala). Also edits incorrectly charged Ser-tRNA(Ala) and Gly-tRNA(Ala) via its editing domain. This is Alanine--tRNA ligase from Chlorobium phaeovibrioides (strain DSM 265 / 1930) (Prosthecochloris vibrioformis (strain DSM 265)).